The sequence spans 266 residues: MLKVISSLLVYMTASVMAVASPLAHSGEPSGEYPTVNEIPVGEVRLYQIADGVWSHIATQSFDGAVYPSNGLIVRDGDELLLIDTAWGAKNTAALLAEIEKQIGLPVTRAVSTHFHDDRVGGVDVLRAAGVATYASPSTRRLAEAEGNEIPTHSLEGLSSSGDAVRFGPVELFYPGAAHSTDNLVVYVPSANVLYGGCAVHELSSTSAGNVADADLAEWPTSVERIQKHYPEAEVVIPGHGLPGGLDLLQHTANVVKAHKNRSVAE.

The first 20 residues, 1–20 (MLKVISSLLVYMTASVMAVA), serve as a signal peptide directing secretion. Zn(2+)-binding residues include His114, His116, Asp118, His179, Cys198, and His240.

This sequence belongs to the metallo-beta-lactamase superfamily. Class-B beta-lactamase family. Monomer. The cofactor is Zn(2+).

The protein resides in the periplasm. The catalysed reaction is a beta-lactam + H2O = a substituted beta-amino acid. With respect to regulation, weakly inhibited by beta-lactamase-blocking agent sulbactam. Its function is as follows. Class B beta-lactamase which confers resistance to the beta-lactam antibiotics, including penicillins, cephalosporins and carbapenems. Acts via hydrolysis of the beta-lactam ring. Has penicillin-, cephalosporin- and carbapenem-hydrolyzing activities. This Pseudomonas aeruginosa (strain ATCC 15692 / DSM 22644 / CIP 104116 / JCM 14847 / LMG 12228 / 1C / PRS 101 / PAO1) protein is Metallo-beta-lactamase VIM-1.